The following is a 121-amino-acid chain: Putative RNase MJ0127 (121 aa).

Residues R76 and H81 contribute to the active site. The short motif at 76 to 83 (RDKLIHHY) is the RX(4)HXY motif element. An O-di-AMP-tyrosine modification is found at Y83.

This sequence belongs to the HepT RNase toxin family. In terms of assembly, homodimer, probably forms a complex with cognate antitoxin MJ0128. In terms of processing, modified by cognate antitoxin MJ0128; probably at least 2 successive AMPylation events occur on Tyr-83.

Its function is as follows. Probable toxic component of a putative type VII toxin-antitoxin (TA) system, probably an RNase. Probably neutralized by cognate antitoxin MJ0128. Neutralization may be due to AMPylation by MJ0128. The sequence is that of Putative RNase MJ0127 from Methanocaldococcus jannaschii (strain ATCC 43067 / DSM 2661 / JAL-1 / JCM 10045 / NBRC 100440) (Methanococcus jannaschii).